A 193-amino-acid chain; its full sequence is Probable gluconokinase (193 aa).

Residue 21 to 28 (GPAGSGKT) coordinates ATP.

It belongs to the gluconokinase GntK/GntV family.

It catalyses the reaction D-gluconate + ATP = 6-phospho-D-gluconate + ADP + H(+). It participates in carbohydrate acid metabolism; D-gluconate degradation. The polypeptide is Probable gluconokinase (Schizosaccharomyces pombe (strain 972 / ATCC 24843) (Fission yeast)).